The sequence spans 324 residues: Glyoxylate/hydroxypyruvate reductase B (324 aa).

Residues Arg237 and Glu266 contribute to the active site. The active-site Proton donor is His285.

It belongs to the D-isomer specific 2-hydroxyacid dehydrogenase family. GhrB subfamily. As to quaternary structure, homodimer.

Its subcellular location is the cytoplasm. The catalysed reaction is glycolate + NADP(+) = glyoxylate + NADPH + H(+). It carries out the reaction (R)-glycerate + NAD(+) = 3-hydroxypyruvate + NADH + H(+). The enzyme catalyses (R)-glycerate + NADP(+) = 3-hydroxypyruvate + NADPH + H(+). In terms of biological role, catalyzes the NADPH-dependent reduction of glyoxylate and hydroxypyruvate into glycolate and glycerate, respectively. The sequence is that of Glyoxylate/hydroxypyruvate reductase B from Escherichia coli O17:K52:H18 (strain UMN026 / ExPEC).